Here is a 379-residue protein sequence, read N- to C-terminus: Protein OSCP1 (379 aa).

Predominantly expressed in testis.

The protein resides in the basal cell membrane. Functionally, may be involved in drug clearance in the placenta. The sequence is that of Protein OSCP1 (Oscp1) from Rattus norvegicus (Rat).